The chain runs to 218 residues: UPF0502 protein Mmwyl1_3509 (218 aa).

It belongs to the UPF0502 family.

The protein is UPF0502 protein Mmwyl1_3509 of Marinomonas sp. (strain MWYL1).